The following is a 397-amino-acid chain: Citrate synthase (397 aa).

Residues histidine 266 and aspartate 320 contribute to the active site.

The protein belongs to the citrate synthase family.

The enzyme catalyses oxaloacetate + acetyl-CoA + H2O = citrate + CoA + H(+). The protein operates within carbohydrate metabolism; tricarboxylic acid cycle; isocitrate from oxaloacetate: step 1/2. This is Citrate synthase (gltA) from Synechocystis sp. (strain ATCC 27184 / PCC 6803 / Kazusa).